A 359-amino-acid chain; its full sequence is 3-dehydroquinate synthase (359 aa).

NAD(+)-binding positions include 70-75, 105-109, 129-130, K142, K151, and 169-172; these read DGEQYK, GVIGD, TT, and FYKT. Zn(2+) is bound by residues E184, H247, and H264.

It belongs to the sugar phosphate cyclases superfamily. Dehydroquinate synthase family. The cofactor is Co(2+). It depends on Zn(2+) as a cofactor. NAD(+) serves as cofactor.

The protein localises to the cytoplasm. It catalyses the reaction 7-phospho-2-dehydro-3-deoxy-D-arabino-heptonate = 3-dehydroquinate + phosphate. It participates in metabolic intermediate biosynthesis; chorismate biosynthesis; chorismate from D-erythrose 4-phosphate and phosphoenolpyruvate: step 2/7. Functionally, catalyzes the conversion of 3-deoxy-D-arabino-heptulosonate 7-phosphate (DAHP) to dehydroquinate (DHQ). The sequence is that of 3-dehydroquinate synthase from Francisella tularensis subsp. mediasiatica (strain FSC147).